The primary structure comprises 407 residues: MAEEEERGPGSVYQMFVLMEDLLDKLKVLDYEQHVLDKHNIKPLSRHYFVSSPHVLSNPGEQFYMFSVIAAWLITLCGRPFDTPQEYDDPNATVSNILSELRTLGGQVDFPPSKLKTGSGEHVCYVLDQLVEKALKSKGFAWNRPLYPSVEVEDECVQEDDAELTLSKVEEEMTQEDEEYEEEDGLDLDALKTRTNGELSGSRPAVVLESDVDAAEWNLEVERVLPQLKVTIRTDNKDWRIHLDQMHQHQDGINTSLQDAKGCLFKLREDISKTLEKVSSREKYLNTQLEHLISEYRQAQSQLNKVKELYQQASGGVTERTRILAEISEELDKVKQEMEEKGSSMSDGAPVVKIRQSLTKLKQEIEQMDVRMGVVEHTLLQAKLREKNNMTRDMHATHLLEPNAQAY.

2 coiled-coil regions span residues 158-186 and 283-373; these read QEDDAELTLSKVEEEMTQEDEEYEEEDGL and KYLN…VRMG. The interval 313–404 is pDED; sequence ASGGVTERTR…HATHLLEPNA (92 aa).

It belongs to the IFT57 family.

It localises to the cytoplasm. Its subcellular location is the cytoskeleton. The protein resides in the cilium basal body. In terms of biological role, required for the formation of cilia. Essential for differentiation and survival of sensory neurons. May also have pro-apoptotic function. The polypeptide is Intraflagellar transport protein 57 homolog (ift57) (Danio rerio (Zebrafish)).